The primary structure comprises 348 residues: GTPase Obg 1 (348 aa).

In terms of domain architecture, Obg spans 1–159 (MSFVDEAKIH…HCVLLKLKIV (159 aa)). The OBG-type G domain occupies 160–329 (SDVGIIGMPN…LHAQVKKAVV (170 aa)). Residues 166-173 (GMPNAGKS), 191-195 (FTTLE), 212-215 (DIPG), 279-282 (NKCD), and 310-312 (GDE) each bind GTP. Serine 173 and threonine 193 together coordinate Mg(2+).

The protein belongs to the TRAFAC class OBG-HflX-like GTPase superfamily. OBG GTPase family. Monomer. It depends on Mg(2+) as a cofactor.

It localises to the cytoplasm. Functionally, an essential GTPase which binds GTP, GDP and possibly (p)ppGpp with moderate affinity, with high nucleotide exchange rates and a fairly low GTP hydrolysis rate. Plays a role in control of the cell cycle, stress response, ribosome biogenesis and in those bacteria that undergo differentiation, in morphogenesis control. This Anaplasma marginale (strain St. Maries) protein is GTPase Obg 1.